The chain runs to 38 residues: Large ribosomal subunit protein bL36A (38 aa).

Belongs to the bacterial ribosomal protein bL36 family.

The protein is Large ribosomal subunit protein bL36A of Cronobacter sakazakii (strain ATCC BAA-894) (Enterobacter sakazakii).